The following is a 114-amino-acid chain: Integration host factor subunit alpha (114 aa).

It belongs to the bacterial histone-like protein family. As to quaternary structure, heterodimer of an alpha and a beta chain.

In terms of biological role, this protein is one of the two subunits of integration host factor, a specific DNA-binding protein that functions in genetic recombination as well as in transcriptional and translational control. This chain is Integration host factor subunit alpha, found in Afipia carboxidovorans (strain ATCC 49405 / DSM 1227 / KCTC 32145 / OM5) (Oligotropha carboxidovorans).